The following is a 272-amino-acid chain: MIHWDQSRTLLSFPRVGLHLSWYGILFSLGIFLSSFSGIKLATALCKDREEKKELRTSLENFALGALLAIIIGARLAYVLFYGGSFYFENPSEIIKIWKGGLSSHGAVISVVIWAAVFSRLHIRKLPMLSVTYICDLCGAVFGCAALLIRVGNFMNQEILGTPTSMPWGVIFPNGGGQIPRHPVQLYEGLGYLVLSCILYRLCYRGVIRLGSGYSAAGALIGVAVIRFCAEFFKTHQGAWLGEENILTIGQWLSIPMIFLGVGIIWIASKKK.

The next 4 helical transmembrane spans lie at 16–36, 62–82, 97–117, and 129–149; these read VGLHLSWYGILFSLGIFLSSF, FALGALLAIIIGARLAYVLFY, IWKGGLSSHGAVISVVIWAAV, and LSVTYICDLCGAVFGCAALLI. Arg150 provides a ligand contact to a 1,2-diacyl-sn-glycero-3-phospho-(1'-sn-glycerol). The next 2 membrane-spanning stretches (helical) occupy residues 206-226 and 246-266; these read GVIRLGSGYSAAGALIGVAVI and ILTIGQWLSIPMIFLGVGIIW.

The protein belongs to the Lgt family.

It localises to the cell inner membrane. The catalysed reaction is L-cysteinyl-[prolipoprotein] + a 1,2-diacyl-sn-glycero-3-phospho-(1'-sn-glycerol) = an S-1,2-diacyl-sn-glyceryl-L-cysteinyl-[prolipoprotein] + sn-glycerol 1-phosphate + H(+). Its pathway is protein modification; lipoprotein biosynthesis (diacylglyceryl transfer). Catalyzes the transfer of the diacylglyceryl group from phosphatidylglycerol to the sulfhydryl group of the N-terminal cysteine of a prolipoprotein, the first step in the formation of mature lipoproteins. The chain is Phosphatidylglycerol--prolipoprotein diacylglyceryl transferase from Chlamydia trachomatis serovar D (strain ATCC VR-885 / DSM 19411 / UW-3/Cx).